The primary structure comprises 396 residues: S-adenosylmethionine synthase (396 aa).

His15 is a binding site for ATP. Position 17 (Asp17) interacts with Mg(2+). Position 43 (Glu43) interacts with K(+). L-methionine-binding residues include Glu56 and Gln99. The segment at 99-109 (QSSDIAMGVDK) is flexible loop. ATP contacts are provided by residues 175–177 (DGK), 241–242 (RF), Asp250, 256–257 (RK), Ala273, and Lys277. Asp250 provides a ligand contact to L-methionine. Lys281 contacts L-methionine.

The protein belongs to the AdoMet synthase family. Homotetramer; dimer of dimers. Requires Mg(2+) as cofactor. K(+) is required as a cofactor.

Its subcellular location is the cytoplasm. It catalyses the reaction L-methionine + ATP + H2O = S-adenosyl-L-methionine + phosphate + diphosphate. Its pathway is amino-acid biosynthesis; S-adenosyl-L-methionine biosynthesis; S-adenosyl-L-methionine from L-methionine: step 1/1. In terms of biological role, catalyzes the formation of S-adenosylmethionine (AdoMet) from methionine and ATP. The overall synthetic reaction is composed of two sequential steps, AdoMet formation and the subsequent tripolyphosphate hydrolysis which occurs prior to release of AdoMet from the enzyme. This Ruminiclostridium cellulolyticum (strain ATCC 35319 / DSM 5812 / JCM 6584 / H10) (Clostridium cellulolyticum) protein is S-adenosylmethionine synthase.